Consider the following 189-residue polypeptide: UPF0301 protein RPR_01165 (189 aa).

It belongs to the UPF0301 (AlgH) family.

The protein is UPF0301 protein RPR_01165 of Rickettsia peacockii (strain Rustic).